A 511-amino-acid polypeptide reads, in one-letter code: MSTANVRVIVRVRPKSLRELSKSAEDLLSVDSHNKTVTITPPKHGLKHSRHKNRVNGPRTFAFDECFAPSAPESKNLSGQEDVYESTGPLLVKSILEGFNSCFITYGQKGTGKTYSVVGLRGQPGIIPHISESIFEEIDKLKKKSPNTTITVSISLAEIIEETPYDLLQPNVNSSHTPGETVFVQKDSLTGYHLHGLSEFEVGSAQEIDAFLRLAAKNIRTELSDISGVRKGHSVFSLVVQQRIIDPKTRHSLKKASRLQIIDLASFSKGSQRNESISSFESSSNNKSLSVLNRVIAALTSKKNDVLIPYKDSVLTTLLQDALGGNCRTIMLTCVSPCDFDDTFSALRYSEAARRIKNISNINCKEAYSTNNEGELDDILTTLESDREQLRRHEEHSQKLLKFIEEIRNDYEERIHALESQNSALKAHLRLAVDAYLNPLEFNFDDKNVKLKEFGSPNIAYKQELNSFQGELSSLFKDLKLVKSQLHDYPKPEVSDIDMDMESLRHDSLLD.

The Kinesin motor domain occupies 5-356; that stretch reads NVRVIVRVRP…LRYSEAARRI (352 aa). An ATP-binding site is contributed by 107–114; the sequence is GQKGTGKT. A phosphoserine mark is found at S278, S279, S284, and S456. A coiled-coil region spans residues 373–489; it reads EGELDDILTT…KLVKSQLHDY (117 aa).

Belongs to the TRAFAC class myosin-kinesin ATPase superfamily. Kinesin family.

The protein localises to the cytoplasm. It is found in the cytoskeleton. This chain is Kinesin-like protein 8 (klp8), found in Schizosaccharomyces pombe (strain 972 / ATCC 24843) (Fission yeast).